The chain runs to 492 residues: N-succinylglutamate 5-semialdehyde dehydrogenase (492 aa).

220-225 (GSASTG) serves as a coordination point for NAD(+). Active-site residues include glutamate 243 and cysteine 277.

The protein belongs to the aldehyde dehydrogenase family. AstD subfamily.

The catalysed reaction is N-succinyl-L-glutamate 5-semialdehyde + NAD(+) + H2O = N-succinyl-L-glutamate + NADH + 2 H(+). The protein operates within amino-acid degradation; L-arginine degradation via AST pathway; L-glutamate and succinate from L-arginine: step 4/5. In terms of biological role, catalyzes the NAD-dependent reduction of succinylglutamate semialdehyde into succinylglutamate. The protein is N-succinylglutamate 5-semialdehyde dehydrogenase of Salmonella dublin (strain CT_02021853).